A 384-amino-acid chain; its full sequence is DNA dC-&gt;dU-editing enzyme APOBEC-3G (384 aa).

The segment at 1 to 60 (MKPHFRNPVERMYQDTFSDNFYNRPILSHRNTVWLCYEVKTKGPSRPPLDAKIFRGQVYS) is essential for cytoplasmic localization. CMP/dCMP-type deaminase domains lie at 29–138 (HRNT…LRSL) and 214–328 (GRHE…LRTL). Phosphothreonine; by PKA is present on Thr32. The Zn(2+) site is built by His65, Cys97, and Cys100. The tract at residues 209 to 336 (ELWVRGRHET…TLAKAGAKIS (128 aa)) is necessary for homooligomerization. The segment at 213-215 (RGR) is interaction with DNA. Phosphothreonine; by PKA and CAMK2 is present on Thr218. Position 257 (His257) interacts with Zn(2+). The Proton donor role is filled by Glu259. Cys288 and Cys291 together coordinate Zn(2+). The interaction with DNA stretch occupies residues 313 to 320 (RIYDDQGR).

Belongs to the cytidine and deoxycytidylate deaminase family. As to quaternary structure, homodimer. Homooligomer. Can bind RNA to form ribonucleoprotein complexes of high-molecular-mass (HMM) or low-molecular-mass (LMM). HMM is inactive and heterogeneous in protein composition because of binding nonselectively to cellular RNAs, which in turn are associated with variety of cellular proteins. The LMM form which is enzymatically active has few or no RNAs associated. Its ability to form homooligomer is distinct from its ability to assemble into HMM. Interacts with APOBEC3B, APOBEC3F, MOV10, AGO2, EIF4E, EIF4ENIF1, DCP2 and DDX6 in an RNA-dependent manner. Interacts with AGO1, AGO3 and PKA/PRKACA. Zn(2+) is required as a cofactor.

The protein localises to the cytoplasm. It is found in the nucleus. Its subcellular location is the P-body. It catalyses the reaction a 2'-deoxycytidine in single-stranded DNA + H2O + H(+) = a 2'-deoxyuridine in single-stranded DNA + NH4(+). Its function is as follows. DNA deaminase (cytidine deaminase) which acts as an inhibitor of retrovirus replication and retrotransposon mobility via deaminase-dependent and -independent mechanisms. Exhibits antiviral activity against vif-deficient: HIV-1 and simian immunodeficiency viruses (SIVs) and also against simian foamy virus (SFV). After the penetration of retroviral nucleocapsids into target cells of infection and the initiation of reverse transcription, it can induce the conversion of cytosine to uracil in the minus-sense single-strand viral DNA, leading to G-to-A hypermutations in the subsequent plus-strand viral DNA. The resultant detrimental levels of mutations in the proviral genome, along with a deamination-independent mechanism that works prior to the proviral integration, together exert efficient antiretroviral effects in infected target cells. Selectively targets single-stranded DNA and does not deaminate double-stranded DNA or single- or double-stranded RNA. May inhibit the mobility of LTR retrotransposons. The chain is DNA dC-&gt;dU-editing enzyme APOBEC-3G (APOBEC3G) from Pan troglodytes (Chimpanzee).